We begin with the raw amino-acid sequence, 387 residues long: Type 2 DNA topoisomerase 6 subunit A (387 aa).

The Topo IIA-type catalytic domain occupies 12 to 160 (EARKKAADTL…MLILSKEKGK (149 aa)). Catalysis depends on tyrosine 106, which acts as the O-(5'-phospho-DNA)-tyrosine intermediate. Residues glutamate 207 and aspartate 259 each contribute to the Mg(2+) site.

The protein belongs to the TOP6A family. Homodimer. Heterotetramer of two Top6A and two Top6B chains. The cofactor is Mg(2+).

It catalyses the reaction ATP-dependent breakage, passage and rejoining of double-stranded DNA.. Functionally, relaxes both positive and negative superturns and exhibits a strong decatenase activity. The polypeptide is Type 2 DNA topoisomerase 6 subunit A (Sulfurisphaera tokodaii (strain DSM 16993 / JCM 10545 / NBRC 100140 / 7) (Sulfolobus tokodaii)).